The primary structure comprises 155 residues: Large ribosomal subunit protein uL15 (155 aa).

A compositionally biased stretch (basic and acidic residues) spans 1–13; that stretch reads MKLNELRDAEGAT. The interval 1-41 is disordered; sequence MKLNELRDAEGATKARKRVGRGIGSGSGKTGGRGVKGQKSR. The segment covering 21-35 has biased composition (gly residues); that stretch reads RGIGSGSGKTGGRGV.

It belongs to the universal ribosomal protein uL15 family. In terms of assembly, part of the 50S ribosomal subunit.

In terms of biological role, binds to the 23S rRNA. The protein is Large ribosomal subunit protein uL15 of Chelativorans sp. (strain BNC1).